The sequence spans 73 residues: UPF0346 protein SAS1364 (73 aa).

This sequence belongs to the UPF0346 family.

The sequence is that of UPF0346 protein SAS1364 from Staphylococcus aureus (strain MSSA476).